A 115-amino-acid chain; its full sequence is uncharacterized protein (115 aa).

This is an uncharacterized protein from Dictyostelium discoideum (Social amoeba).